An 840-amino-acid polypeptide reads, in one-letter code: Phosphatidylglycerol lysyltransferase (840 aa).

The Cytoplasmic portion of the chain corresponds to 1 to 8; that stretch reads MNQEVKNK. A helical transmembrane segment spans residues 9–29; that stretch reads IFSILKITFATALFIFVAITL. The Extracellular portion of the chain corresponds to 30–52; that stretch reads YRELSGINFKDTLVEFSKINRMS. Residues 53 to 73 traverse the membrane as a helical segment; that stretch reads LVLLFIGGGASLVILSMYDVI. Topologically, residues 74 to 89 are cytoplasmic; that stretch reads LSRALKMDISLGKVLR. Residues 90 to 110 traverse the membrane as a helical segment; that stretch reads VSYIINALNAIVGFGGFIGAG. Residues 111 to 128 are Extracellular-facing; the sequence is VRAMVYKNYTHDKKKLVH. Residues 129–149 traverse the membrane as a helical segment; the sequence is FISLILISMLTGLSLLSLLIV. The Cytoplasmic segment spans residues 150 to 161; it reads FHVFDASLILDK. The helical transmembrane segment at 162-182 threads the bilayer; the sequence is ITWVRWVLYVVSFFLPLFIIY. Over 183-200 the chain is Extracellular; that stretch reads SMVRPPDKNNRFVGLYCT. The helical transmembrane segment at 201 to 221 threads the bilayer; that stretch reads LVSCVEWLAAAVVLYFCGVIV. The Cytoplasmic portion of the chain corresponds to 222-229; that stretch reads DAHVSFMS. The chain crosses the membrane as a helical span at residues 230–250; it reads FIAIFIIAALSGLVSFIPGGF. Topologically, residues 251–271 are extracellular; that stretch reads GAFDLVVLLGFKTLGVPEEKV. The chain crosses the membrane as a helical span at residues 272–292; the sequence is LLMLLLYRFAYYFVPVIIALI. Topologically, residues 293–337 are cytoplasmic; that stretch reads LSSFEFGTSAKKYIEGSKYFIPAKDVTSFLMSYQKDIIAKIPSLS. The helical transmembrane segment at 338 to 358 threads the bilayer; the sequence is LAILVFFTSMIFFVNNLTIVY. Residues 359-369 lie on the Extracellular side of the membrane; the sequence is DALYDGNHLTY. The chain crosses the membrane as a helical span at residues 370-390; sequence YILLAIHTSACLLLLLNVVGI. Topologically, residues 391 to 394 are cytoplasmic; it reads YKQS. The next 2 helical transmembrane spans lie at 395 to 415 and 416 to 436; these read RRAIIFAMISILLITVATFFT and YASYILITWLAIIFVLLIVAF. Topologically, residues 437 to 450 are cytoplasmic; it reads RRARRLKRPVRMRN. Residues 451–471 form a helical membrane-spanning segment; the sequence is IVAMLLFSLFILYVNHIFIAG. At 472 to 489 the chain is on the extracellular side; the sequence is TLYALDIYTIEMHTSVLR. A helical transmembrane segment spans residues 490 to 510; it reads YYFWLTILIIAIIIGMIAWLF. At 511-840 the chain is on the cytoplasmic side; sequence DYQFSKVRIS…SKVMRVIRHK (330 aa).

This sequence belongs to the LPG synthase family.

It localises to the cell membrane. It carries out the reaction L-lysyl-tRNA(Lys) + a 1,2-diacyl-sn-glycero-3-phospho-(1'-sn-glycerol) = a 1,2-diacyl-sn-glycero-3-phospho-1'-(3'-O-L-lysyl)-sn-glycerol + tRNA(Lys). Catalyzes the transfer of a lysyl group from L-lysyl-tRNA(Lys) to membrane-bound phosphatidylglycerol (PG), which produces lysylphosphatidylglycerol (LPG), a major component of the bacterial membrane with a positive net charge. LPG synthesis contributes to bacterial virulence as it is involved in the resistance mechanism against cationic antimicrobial peptides (CAMP) produces by the host's immune system (defensins, cathelicidins) and by the competing microorganisms (bacteriocins). In fact, the modification of anionic phosphatidylglycerol with positively charged L-lysine results in repulsion of the peptides. In Staphylococcus aureus (strain COL), this protein is Phosphatidylglycerol lysyltransferase (mprF).